The sequence spans 414 residues: MTQANLSETLFKPRFKHPETSTLVRRFNHGAQPPVQSALDGKTIPHWYRMINRLMWIWRGIDPREILDVQARIVMSDAERTDDDLYDTVIGYRGGNWIYEWATQAMVWQQKACTEEDPQLSGRHWLHAATLYNIAAYPHLKGDDLAEQAQALSNRAYEEAAQRLPGTMRQMEFTVPGGAPITGFLHMPKGDGPFPTVLMCGGLDAMQTDYYSLYERYFAPRGIAMLTIDMPSVGFSSKWKLTQDSSLLHQHVLKALPNVPWVDHTRVAAFGFRFGANVAVRLAYLESPRLKAVACLGPVVHTLLSDFKCQQQVPEMYLDVLASRLGMHDASDEALRVELNRYSLKVQGLLGRRCPTPMLSGYWKNDPFSPEEDSRLITSSSADGKLLEIPFNPVYRNFDKGLQEITGWIEKRLC.

Belongs to the FrsA family.

It catalyses the reaction a carboxylic ester + H2O = an alcohol + a carboxylate + H(+). Its function is as follows. Catalyzes the hydrolysis of esters. In Shigella flexneri serotype 5b (strain 8401), this protein is Esterase FrsA.